Here is a 263-residue protein sequence, read N- to C-terminus: MARGPKKHLKRVAAPKHWMLDKLTGVFAPRPSTGPHKLRECLPLIIFLRNRLKYALTGDEVKKICMQRFIKIDGKVRTDITYPAGFMDVISIDKTGENFRLIYDTKGRFAVHRITSEEAKYKLCKVRKIFVGTKGIPHLVTHDARTIRYPDPLIKVNDTIQIDLETGKITDFIKFDTGNLCMVTGGANLGRIGVITNRERHPGSFDVVHVKDANGNSFATRLSNIFVIGKGNKPWISLPRGKGIRLTIAEERDKRLAAKQSSG.

An S4 RNA-binding domain is found at 42–104; the sequence is LPLIIFLRNR…TGENFRLIYD (63 aa).

Belongs to the eukaryotic ribosomal protein eS4 family.

In Cricetulus griseus (Chinese hamster), this protein is Small ribosomal subunit protein eS4 (RPS4).